A 384-amino-acid chain; its full sequence is Small ribosomal subunit protein mS31 (384 aa).

Residues Met1–Ser54 constitute a mitochondrion transit peptide. Residues Thr101–Arg136 form a disordered region. Over residues Thr121–Arg136 the composition is skewed to basic and acidic residues.

Belongs to the mitochondrion-specific ribosomal protein mS31 family. As to quaternary structure, component of the mitochondrial ribosome small subunit (28S) which comprises a 12S rRNA and about 30 distinct proteins.

The protein localises to the mitochondrion. The polypeptide is Small ribosomal subunit protein mS31 (Mrps31) (Mus musculus (Mouse)).